Here is a 587-residue protein sequence, read N- to C-terminus: Polyphenol oxidase E, chloroplastic (587 aa).

A chloroplast-targeting transit peptide spans 1–87 (MSSSSSITTT…AANLAPLATA (87 aa)). Disulfide bonds link Cys98-Cys114 and Cys113-Cys180. The Cu cation site is built by His179, His197, His206, His328, His332, and His363. A cross-link (2'-(S-cysteinyl)-histidine (Cys-His)) is located at residues 183–197 (CNGAYKVGGKELQVH).

This sequence belongs to the tyrosinase family. Cu(2+) serves as cofactor.

The protein localises to the plastid. Its subcellular location is the chloroplast thylakoid lumen. It catalyses the reaction 2 catechol + O2 = 2 1,2-benzoquinone + 2 H2O. Functionally, catalyzes the oxidation of mono- and o-diphenols to o-diquinones. This Solanum lycopersicum (Tomato) protein is Polyphenol oxidase E, chloroplastic.